The following is an 886-amino-acid chain: UPF0592 membrane protein C7D4.03c (886 aa).

Residues 87 to 112 form a disordered region; sequence ILNEPYNESPSSSSSDSSSRSTSPFS. Low complexity predominate over residues 95–112; the sequence is SPSSSSSDSSSRSTSPFS. Helical transmembrane passes span 277–297, 374–394, and 400–420; these read FCASILVLSFFQLPLFADHFL, GGFFFEFLSCYHSFLALQFSF, and VIYFAPGYICLHAYLLELTIS.

The protein belongs to the UPF0592 family.

It is found in the membrane. The protein is UPF0592 membrane protein C7D4.03c of Schizosaccharomyces pombe (strain 972 / ATCC 24843) (Fission yeast).